The primary structure comprises 144 residues: MAAPSGGVNCEEFAEFQELLKVMRTIDDRIVHELNTTVPTASFAGKIDASQTCKQLYESLMAAHASRDRVIKNCIAQTSAVVKNLREEREKNLDDLTLLKQLRKEQTKLKWMQSELNVEEVVNDRSWKVFNERCRIHFKPPKNE.

Ala-2 is modified (N-acetylalanine). A coiled-coil region spans residues 82–120 (VKNLREEREKNLDDLTLLKQLRKEQTKLKWMQSELNVEE). An N6-acetyllysine modification is found at Lys-100.

The protein belongs to the MIX23 family.

The chain is Protein MIX23 from Homo sapiens (Human).